The sequence spans 500 residues: Inner membrane transporter YjeM (500 aa).

Over 1–7 the chain is Cytoplasmic; the sequence is MPHTIKK. A helical membrane pass occupies residues 8–28; the sequence is MSLIGLILMIFTSVFGFANSP. The Periplasmic portion of the chain corresponds to 29 to 37; the sequence is SAYYLMGYS. Residues 38 to 58 form a helical membrane-spanning segment; it reads AIPFYIFSALLFFIPFALMMA. Residues 59-82 lie on the Cytoplasmic side of the membrane; it reads EMGAAYRKEEGGIYSWMNNSVGPR. A helical transmembrane segment spans residues 83–103; sequence FAFIGTFMWFSSYIIWMVSTS. At 104–132 the chain is on the periplasmic side; the sequence is AKVWVPFSTFLYGSDMTQHWRIAGLEPTQ. The helical transmembrane segment at 133–153 threads the bilayer; the sequence is VVGLLAVAWMILVTVVASKGI. Topologically, residues 154-163 are cytoplasmic; that stretch reads NKIARITAVG. The helical transmembrane segment at 164 to 184 threads the bilayer; the sequence is GIAVMCLNLVLLLVSITILLL. The Periplasmic segment spans residues 185 to 209; the sequence is NGGHFAQDINFLASPNPGYQSGLAM. A helical transmembrane segment spans residues 210 to 230; that stretch reads LSFVVFAIFAYGGIEAVGGLV. The Cytoplasmic segment spans residues 231 to 243; the sequence is DKTENPEKNFAKG. The helical transmembrane segment at 244 to 264 threads the bilayer; that stretch reads IVFAAIVISIGYSLAIFLWGV. At 265-319 the chain is on the periplasmic side; it reads STNWQQVLSNGSVNLGNITYVLMKSLGMTLGNALHLSPEASLSLGVWFARITGLS. Residues 320–340 traverse the membrane as a helical segment; sequence MFLAYTGAFFTLCYSPLKAII. The Cytoplasmic portion of the chain corresponds to 341 to 369; the sequence is QGTPKALWPEPMTRLNAMGMPSIAMWMQC. Residues 370–390 form a helical membrane-spanning segment; it reads GLVTVFILLVSFGGGTASAFF. The Periplasmic portion of the chain corresponds to 391–394; it reads NKLT. A helical transmembrane segment spans residues 395–415; sequence LMANVSMTLPYLFLALAFPFF. Residues 416–433 are Cytoplasmic-facing; it reads KARQDLDRPFVIFKTHLS. The chain crosses the membrane as a helical span at residues 434-454; the sequence is AMIATVVVVLVVTFANVFTII. At 455 to 462 the chain is on the periplasmic side; it reads QPVVEAGD. The helical transmembrane segment at 463-483 threads the bilayer; sequence WDSTLWMIGGPVFFSLLAMAI. Residues 484–500 are Cytoplasmic-facing; it reads YQNYCSRVAKNPQWAVE.

Belongs to the amino acid-polyamine-organocation (APC) superfamily.

It localises to the cell inner membrane. This chain is Inner membrane transporter YjeM (yjeM), found in Escherichia coli (strain K12).